The primary structure comprises 410 residues: Arginine deiminase (410 aa).

Catalysis depends on Cys400, which acts as the Amidino-cysteine intermediate.

It belongs to the arginine deiminase family.

The protein localises to the cytoplasm. The enzyme catalyses L-arginine + H2O = L-citrulline + NH4(+). It functions in the pathway amino-acid degradation; L-arginine degradation via ADI pathway; carbamoyl phosphate from L-arginine: step 1/2. This chain is Arginine deiminase, found in Lactococcus lactis subsp. cremoris (strain MG1363).